Reading from the N-terminus, the 185-residue chain is Homeobox expressed in ES cells 1 (185 aa).

The homeobox DNA-binding region spans 108 to 167; that stretch reads GRRPRTAFTQNQIEVLENVFRVNCYPGIDIREDLAQKLNLEEDRIQIWFQNRRAKLKRSH.

The protein belongs to the ANF homeobox family. As to quaternary structure, can form heterodimers with PROP1 in binding to DNA. Interacts with TLE1.

The protein resides in the nucleus. Its function is as follows. Required for the normal development of the forebrain, eyes and other anterior structures such as the olfactory placodes and pituitary gland. Possible transcriptional repressor. Binds to the palindromic PIII sequence, 5'-AGCTTGAGTCTAATTGAATTAACTGTAC-3'. HESX1 and PROP1 bind as heterodimers on this palindromic site, and, in vitro, HESX1 can antagonize PROP1 activation. This Pan troglodytes (Chimpanzee) protein is Homeobox expressed in ES cells 1 (HESX1).